We begin with the raw amino-acid sequence, 133 residues long: Fluoride-specific ion channel FluC (133 aa).

4 helical membrane-spanning segments follow: residues 3–23, 41–61, 76–96, and 103–123; these read AVVW…GSGL, WGTL…LIWV, IVGL…CLVF, and LIVG…VFLG. Na(+) contacts are provided by Gly81 and Thr84.

Belongs to the fluoride channel Fluc/FEX (TC 1.A.43) family.

The protein resides in the cell inner membrane. It catalyses the reaction fluoride(in) = fluoride(out). Its activity is regulated as follows. Na(+) is not transported, but it plays an essential structural role and its presence is essential for fluoride channel function. Fluoride-specific ion channel. Important for reducing fluoride concentration in the cell, thus reducing its toxicity. The polypeptide is Fluoride-specific ion channel FluC (Xylella fastidiosa (strain M23)).